Here is a 94-residue protein sequence, read N- to C-terminus: Small ribosomal subunit protein uS19 (94 aa).

It belongs to the universal ribosomal protein uS19 family.

Protein S19 forms a complex with S13 that binds strongly to the 16S ribosomal RNA. The protein is Small ribosomal subunit protein uS19 of Hamiltonella defensa subsp. Acyrthosiphon pisum (strain 5AT).